Reading from the N-terminus, the 399-residue chain is Probable WRKY transcription factor 48 (399 aa).

Basic and acidic residues-rich tracts occupy residues 1-11 and 19-38; these read MEKKKEEDHHH and KEIK…EQKQ. 2 disordered regions span residues 1–57 and 138–202; these read MEKK…TSSD and AESS…KNQK. The span at 143-161 shows a compositional bias: low complexity; sequence VVNTTPTSPNSTSVSSSSN. Over residues 162–171 the composition is skewed to polar residues; the sequence is EAANDNNSGK. A compositionally biased stretch (low complexity) spans 184-193; sequence QQEQKGTKPQ. The segment at residues 215 to 280 is a DNA-binding region (WRKY); it reads SDIDNLDDGY…YEGQHTHPFP (66 aa). The disordered stretch occupies residues 361–399; it reads QASTSTSSSIRDHGLLQDILPSQIRSDTINTQTNEENKK. The span at 383 to 399 shows a compositional bias: polar residues; it reads QIRSDTINTQTNEENKK.

It is found in the nucleus. Its function is as follows. Transcription factor. Interacts specifically with the W box (5'-(T)TGAC[CT]-3'), a frequently occurring elicitor-responsive cis-acting element. This is Probable WRKY transcription factor 48 (WRKY48) from Arabidopsis thaliana (Mouse-ear cress).